A 342-amino-acid polypeptide reads, in one-letter code: Dysbindin (342 aa).

Ser-11 is subject to Phosphoserine. Residues 83–180 (LSAHWEKKQA…AELDAEHSQK (98 aa)) are a coiled coil. The Nuclear export signal signature appears at 243-256 (LMDISDQEALDVFL). The tract at residues 263-342 (NTLLSPISGP…ATLHSDDSDS (80 aa)) is disordered. Residues 286–305 (PTPSQAPATPPSSSSPGTDP) show a composition bias toward low complexity. Ser-316, Ser-321, and Ser-340 each carry phosphoserine.

This sequence belongs to the dysbindin family. As to quaternary structure, interacts (via its coiled coil domain) with KXD1. Interacts with CMYA5, PI4K2 and RNF151. Component of the biogenesis of lysosome-related organelles complex 1 (BLOC-1) composed of at least BLOC1S1, BLOC1S2, BLOC1S3, BLOC1S4, BLOC1S5, BLOC1S6, DTNBP1/BLOC1S7 and SNAPIN/BLOC1S8. Interacts directly in the complex with BLOC1S5, BLOC1S6 and SNAPIN/BLOC1S8. The BLOC-1 complex associates with the AP-3 protein complex and membrane protein cargos. This BLOC-1 complex also associates with the BLOC-2 complex in endosomes. Binds to DTNA and DTNB but may not be a physiological binding partner. Interacts with the DNA-dependent protein kinase complex DNA-PK; the interaction phosphorylates DTNBP1 in vitro. Interacts directly in this complex with XRCC5 and XRCC6. Interacts with AP3M1, AP3B2 and TRIM32. Interacts with XPO1; the interaction exports DTNBP1 out of the nucleus. Ubiquitinated by TRIM32. Ubiquitination leads to DTNBP1 degradation.

It localises to the cytoplasm. The protein resides in the cytoplasmic vesicle membrane. It is found in the cytoplasmic vesicle. Its subcellular location is the secretory vesicle. The protein localises to the synaptic vesicle membrane. It localises to the endosome membrane. The protein resides in the melanosome membrane. It is found in the nucleus. Its subcellular location is the postsynaptic density. The protein localises to the presynaptic cell membrane. It localises to the endoplasmic reticulum. Its function is as follows. Component of the BLOC-1 complex, a complex that is required for normal biogenesis of lysosome-related organelles (LRO), such as platelet dense granules and melanosomes. In concert with the AP-3 complex, the BLOC-1 complex is required to target membrane protein cargos into vesicles assembled at cell bodies for delivery into neurites and nerve terminals. The BLOC-1 complex, in association with SNARE proteins, is also proposed to be involved in neurite extension. Associates with the BLOC-2 complex to facilitate the transport of TYRP1 independent of AP-3 function. Plays a role in synaptic vesicle trafficking and in neurotransmitter release. Plays a role in the regulation of cell surface exposure of DRD2. May play a role in actin cytoskeleton reorganization and neurite outgrowth. May modulate MAPK8 phosphorylation. Appears to promote neuronal transmission and viability through regulating the expression of SNAP25 and SYN1, modulating PI3-kinase-Akt signaling and influencing glutamatergic release. Regulates the expression of SYN1 through binding to its promoter. Modulates prefrontal cortical activity via the dopamine/D2 pathway. In Bos taurus (Bovine), this protein is Dysbindin (DTNBP1).